The primary structure comprises 202 residues: Putative NADH dehydrogenase/NAD(P)H nitroreductase SCO7141 (202 aa).

It belongs to the nitroreductase family. HadB/RutE subfamily. FMN is required as a cofactor.

This chain is Putative NADH dehydrogenase/NAD(P)H nitroreductase SCO7141, found in Streptomyces coelicolor (strain ATCC BAA-471 / A3(2) / M145).